A 388-amino-acid chain; its full sequence is Chorismate synthase (388 aa).

Residues Arg39 and Arg45 each contribute to the NADP(+) site. Residues 132–134 (RSS), 251–252 (NA), Gly296, 311–315 (KPIPT), and Arg337 contribute to the FMN site.

It belongs to the chorismate synthase family. As to quaternary structure, homotetramer. Requires FMNH2 as cofactor.

The catalysed reaction is 5-O-(1-carboxyvinyl)-3-phosphoshikimate = chorismate + phosphate. The protein operates within metabolic intermediate biosynthesis; chorismate biosynthesis; chorismate from D-erythrose 4-phosphate and phosphoenolpyruvate: step 7/7. Functionally, catalyzes the anti-1,4-elimination of the C-3 phosphate and the C-6 proR hydrogen from 5-enolpyruvylshikimate-3-phosphate (EPSP) to yield chorismate, which is the branch point compound that serves as the starting substrate for the three terminal pathways of aromatic amino acid biosynthesis. This reaction introduces a second double bond into the aromatic ring system. This Staphylococcus aureus (strain COL) protein is Chorismate synthase.